The sequence spans 477 residues: Bifunctional protein HldE (477 aa).

Positions 1-318 (MKVTLPEFER…ENAVRGRADT (318 aa)) are ribokinase. N6-acetyllysine is present on Lys-179. 195 to 198 (NLSE) is a binding site for ATP. Asp-264 is an active-site residue. The tract at residues 344 to 477 (MTNGVFDILH…IKKIQQDKKG (134 aa)) is cytidylyltransferase.

The protein in the N-terminal section; belongs to the carbohydrate kinase PfkB family. This sequence in the C-terminal section; belongs to the cytidylyltransferase family. In terms of assembly, homodimer.

The catalysed reaction is D-glycero-beta-D-manno-heptose 7-phosphate + ATP = D-glycero-beta-D-manno-heptose 1,7-bisphosphate + ADP + H(+). It catalyses the reaction D-glycero-beta-D-manno-heptose 1-phosphate + ATP + H(+) = ADP-D-glycero-beta-D-manno-heptose + diphosphate. The protein operates within nucleotide-sugar biosynthesis; ADP-L-glycero-beta-D-manno-heptose biosynthesis; ADP-L-glycero-beta-D-manno-heptose from D-glycero-beta-D-manno-heptose 7-phosphate: step 1/4. Its pathway is nucleotide-sugar biosynthesis; ADP-L-glycero-beta-D-manno-heptose biosynthesis; ADP-L-glycero-beta-D-manno-heptose from D-glycero-beta-D-manno-heptose 7-phosphate: step 3/4. Functionally, catalyzes the phosphorylation of D-glycero-D-manno-heptose 7-phosphate at the C-1 position to selectively form D-glycero-beta-D-manno-heptose-1,7-bisphosphate. In terms of biological role, catalyzes the ADP transfer from ATP to D-glycero-beta-D-manno-heptose 1-phosphate, yielding ADP-D-glycero-beta-D-manno-heptose. The protein is Bifunctional protein HldE of Escherichia fergusonii (strain ATCC 35469 / DSM 13698 / CCUG 18766 / IAM 14443 / JCM 21226 / LMG 7866 / NBRC 102419 / NCTC 12128 / CDC 0568-73).